Reading from the N-terminus, the 347-residue chain is Probable tRNA N6-adenosine threonylcarbamoyltransferase (347 aa).

A divalent metal cation-binding residues include His-109, His-113, and Tyr-130. Residues 130–134 (YVSGG), Asp-162, Gly-177, Glu-181, and Asn-277 contribute to the substrate site. An a divalent metal cation-binding site is contributed by Asp-305.

Belongs to the KAE1 / TsaD family. Component of the EKC/KEOPS complex; the whole complex dimerizes. A divalent metal cation serves as cofactor.

The protein resides in the cytoplasm. Its subcellular location is the nucleus. The enzyme catalyses L-threonylcarbamoyladenylate + adenosine(37) in tRNA = N(6)-L-threonylcarbamoyladenosine(37) in tRNA + AMP + H(+). Functionally, component of the EKC/KEOPS complex that is required for the formation of a threonylcarbamoyl group on adenosine at position 37 (t(6)A37) in tRNAs that read codons beginning with adenine. The complex is probably involved in the transfer of the threonylcarbamoyl moiety of threonylcarbamoyl-AMP (TC-AMP) to the N6 group of A37. Likely plays a direct catalytic role in this reaction, but requires other protein(s) of the complex to fulfill this activity. The sequence is that of Probable tRNA N6-adenosine threonylcarbamoyltransferase from Drosophila melanogaster (Fruit fly).